The following is a 337-amino-acid chain: MQRLVEIERFDSEESVEVTLRPSAWNEYIGQEQIKKNLGVFIEASKKRAEALDHVLFYGPPGLGKTTLALIIANEMNANIKVTAAPMIEKSGDLAAILTNLEEGDVLFIDEIHRLSPAVEEILYSSMEDFRIDIIIGSGPAAQTLKIDLPRFTLIGATTRAGMLSNPLRDRFGMNFRMQFYSPEELSKIISQASNKLNKKIADEACSEIAKRSRGTPRIALRLLRRVRDFADVANEKDILHSRAQYALDELGINSYGFDEMDIKLLNLLVGANGRAMGLSTIAAALSEDEGTVEDVLEPYLIANGYLERTAKGRKATPSTYKILNVTMPALDDGGLF.

Residues 1–181 (MQRLVEIERF…FGMNFRMQFY (181 aa)) form a large ATPase domain (RuvB-L) region. ATP-binding positions include L20, R21, G62, K65, T66, T67, 128–130 (EDF), R171, Y181, and R218. T66 provides a ligand contact to Mg(2+). A small ATPAse domain (RuvB-S) region spans residues 182–252 (SPEELSKIIS…RAQYALDELG (71 aa)). Residues 255 to 337 (SYGFDEMDIK…MPALDDGGLF (83 aa)) are head domain (RuvB-H). Positions 309 and 314 each coordinate DNA.

The protein belongs to the RuvB family. As to quaternary structure, homohexamer. Forms an RuvA(8)-RuvB(12)-Holliday junction (HJ) complex. HJ DNA is sandwiched between 2 RuvA tetramers; dsDNA enters through RuvA and exits via RuvB. An RuvB hexamer assembles on each DNA strand where it exits the tetramer. Each RuvB hexamer is contacted by two RuvA subunits (via domain III) on 2 adjacent RuvB subunits; this complex drives branch migration. In the full resolvosome a probable DNA-RuvA(4)-RuvB(12)-RuvC(2) complex forms which resolves the HJ.

It localises to the cytoplasm. It catalyses the reaction ATP + H2O = ADP + phosphate + H(+). The RuvA-RuvB-RuvC complex processes Holliday junction (HJ) DNA during genetic recombination and DNA repair, while the RuvA-RuvB complex plays an important role in the rescue of blocked DNA replication forks via replication fork reversal (RFR). RuvA specifically binds to HJ cruciform DNA, conferring on it an open structure. The RuvB hexamer acts as an ATP-dependent pump, pulling dsDNA into and through the RuvAB complex. RuvB forms 2 homohexamers on either side of HJ DNA bound by 1 or 2 RuvA tetramers; 4 subunits per hexamer contact DNA at a time. Coordinated motions by a converter formed by DNA-disengaged RuvB subunits stimulates ATP hydrolysis and nucleotide exchange. Immobilization of the converter enables RuvB to convert the ATP-contained energy into a lever motion, pulling 2 nucleotides of DNA out of the RuvA tetramer per ATP hydrolyzed, thus driving DNA branch migration. The RuvB motors rotate together with the DNA substrate, which together with the progressing nucleotide cycle form the mechanistic basis for DNA recombination by continuous HJ branch migration. Branch migration allows RuvC to scan DNA until it finds its consensus sequence, where it cleaves and resolves cruciform DNA. In Sulfurimonas denitrificans (strain ATCC 33889 / DSM 1251) (Thiomicrospira denitrificans (strain ATCC 33889 / DSM 1251)), this protein is Holliday junction branch migration complex subunit RuvB.